A 142-amino-acid chain; its full sequence is Hemoglobin subunit alpha-A (142 aa).

In terms of domain architecture, Globin spans 2–142 (VLSANDKSNV…VGTVLTAKYR (141 aa)). His59 provides a ligand contact to O2. His88 is a heme b binding site.

It belongs to the globin family. In terms of assembly, heterotetramer of two alpha chains and two beta chains. Red blood cells.

Involved in oxygen transport from the lung to the various peripheral tissues. The sequence is that of Hemoglobin subunit alpha-A (HBAA) from Columba livia (Rock dove).